The chain runs to 235 residues: Protein FAM3B (235 aa).

The signal sequence occupies residues 1 to 29 (MRPLAGGLLKVVFVVFASLCAWYSGYLLA). 2 cysteine pairs are disulfide-bonded: Cys63–Cys91 and Cys69–Cys229. Positions 72–233 (DTYAYRLLSG…IQIEGCIPKE (162 aa)) constitute a GG-type lectin domain. 2 N-linked (GlcNAc...) asparagine glycosylation sites follow: Asn120 and Asn208.

This sequence belongs to the FAM3 family. 2 N-termini have been observed in the mature protein: the first at Glu-30, resulting from signal peptide cleavage, the second at Ser-46. Post-translationally, O-glycosylated. As to expression, highly expressed in the pancreas. Also found in the colon, kidney, prostate, small intestine and testis.

The protein resides in the secreted. Its function is as follows. Induces apoptosis of alpha and beta cells in a dose- and time-dependent manner. In Homo sapiens (Human), this protein is Protein FAM3B (FAM3B).